The following is a 307-amino-acid chain: Ribosomal RNA small subunit methyltransferase H (307 aa).

S-adenosyl-L-methionine contacts are provided by residues 32 to 34 (GGH), Asp-52, Phe-78, Asp-100, and Gln-107.

The protein belongs to the methyltransferase superfamily. RsmH family.

The protein localises to the cytoplasm. The catalysed reaction is cytidine(1402) in 16S rRNA + S-adenosyl-L-methionine = N(4)-methylcytidine(1402) in 16S rRNA + S-adenosyl-L-homocysteine + H(+). In terms of biological role, specifically methylates the N4 position of cytidine in position 1402 (C1402) of 16S rRNA. This Coxiella burnetii (strain Dugway 5J108-111) protein is Ribosomal RNA small subunit methyltransferase H.